The following is a 149-amino-acid chain: UPF0178 protein Cphy_3042 (149 aa).

The segment covering Q112–R128 has biased composition (basic residues). The interval Q112–D132 is disordered.

Belongs to the UPF0178 family.

The polypeptide is UPF0178 protein Cphy_3042 (Lachnoclostridium phytofermentans (strain ATCC 700394 / DSM 18823 / ISDg) (Clostridium phytofermentans)).